We begin with the raw amino-acid sequence, 398 residues long: Bifunctional enzyme IspD/IspF (398 aa).

A 2-C-methyl-D-erythritol 4-phosphate cytidylyltransferase region spans residues 1–234; sequence MPNPPRTAAI…SRLTALLGDI (234 aa). Positions 235 to 398 are 2-C-methyl-D-erythritol 2,4-cyclodiphosphate synthase; the sequence is RTGTGYDVHA…LPWGAEGLAG (164 aa). Residues aspartate 241 and histidine 243 each contribute to the a divalent metal cation site. Residues 241 to 243 and 267 to 268 contribute to the 4-CDP-2-C-methyl-D-erythritol 2-phosphate site; these read DVH and HS. Histidine 275 contributes to the a divalent metal cation binding site. Residues 289-291, 365-368, phenylalanine 372, and arginine 375 each bind 4-CDP-2-C-methyl-D-erythritol 2-phosphate; these read DIG and TTSE.

This sequence in the N-terminal section; belongs to the IspD/TarI cytidylyltransferase family. IspD subfamily. It in the C-terminal section; belongs to the IspF family. The cofactor is a divalent metal cation.

The enzyme catalyses 2-C-methyl-D-erythritol 4-phosphate + CTP + H(+) = 4-CDP-2-C-methyl-D-erythritol + diphosphate. It carries out the reaction 4-CDP-2-C-methyl-D-erythritol 2-phosphate = 2-C-methyl-D-erythritol 2,4-cyclic diphosphate + CMP. It participates in isoprenoid biosynthesis; isopentenyl diphosphate biosynthesis via DXP pathway; isopentenyl diphosphate from 1-deoxy-D-xylulose 5-phosphate: step 2/6. The protein operates within isoprenoid biosynthesis; isopentenyl diphosphate biosynthesis via DXP pathway; isopentenyl diphosphate from 1-deoxy-D-xylulose 5-phosphate: step 4/6. Its function is as follows. Bifunctional enzyme that catalyzes the formation of 4-diphosphocytidyl-2-C-methyl-D-erythritol from CTP and 2-C-methyl-D-erythritol 4-phosphate (MEP) (IspD), and catalyzes the conversion of 4-diphosphocytidyl-2-C-methyl-D-erythritol 2-phosphate (CDP-ME2P) to 2-C-methyl-D-erythritol 2,4-cyclodiphosphate (ME-CPP) with a corresponding release of cytidine 5-monophosphate (CMP) (IspF). The polypeptide is Bifunctional enzyme IspD/IspF (Rhodopseudomonas palustris (strain BisB5)).